The chain runs to 619 residues: Mitochondrial Rho GTPase 1 (619 aa).

The Cytoplasmic portion of the chain corresponds to 1–593; the sequence is MKKDVRILLV…TQADLKSSTF (593 aa). The 167-residue stretch at 2 to 168 folds into the Miro 1 domain; that stretch reads KKDVRILLVG…FYYAQKAVLH (167 aa). The GTP site is built by Arg-14, Gly-16, Lys-17, Thr-18, and Ser-19. A Mg(2+)-binding site is contributed by Thr-18. Mg(2+) is bound by residues Pro-35 and Asp-57. The GTP site is built by Ser-59, Asn-118, Lys-119, Asp-121, Ala-149, and Lys-150. EF-hand domains lie at 184 to 219 and 304 to 339; these read ACIK…CFNT and HAYL…FPYM. Asp-197, Asp-199, Asp-201, Thr-203, Glu-208, Asp-317, Asp-319, Asp-321, Ala-323, and Glu-328 together coordinate Ca(2+). The 164-residue stretch at 417–580 folds into the Miro 2 domain; it reads RNVFRCNVVG…FVKLTTMAMY (164 aa). The GTP site is built by Gly-429, Cys-430, Gly-431, Lys-432, Ser-433, Gly-434, Arg-448, Lys-529, Asp-531, Thr-559, and Cys-560. Gly-429 serves as a coordination point for Mg(2+). A helical; Anchor for type IV membrane protein membrane pass occupies residues 594 to 616; that stretch reads WLRASFGATVFAFLGFAMYKALI. The Mitochondrial intermembrane segment spans residues 617 to 619; that stretch reads KQR.

This sequence belongs to the mitochondrial Rho GTPase family. As to quaternary structure, homodimer.

Its subcellular location is the mitochondrion outer membrane. It catalyses the reaction GTP + H2O = GDP + phosphate + H(+). The catalysed reaction is ATP + H2O = ADP + phosphate + H(+). The enzyme catalyses UTP + H2O = UDP + phosphate + H(+). In terms of biological role, atypical mitochondrial nucleoside-triphosphatase (NTPase) involved in mitochondrial trafficking. Probably involved in control of anterograde transport of mitochondria and their subcellular distribution. Can hydrolyze GTP, ATP and UTP. This chain is Mitochondrial Rho GTPase 1 (RHOT1), found in Gallus gallus (Chicken).